The following is a 642-amino-acid chain: 1-deoxy-D-xylulose-5-phosphate synthase (642 aa).

Residues histidine 79 and 120–122 (AHS) contribute to the thiamine diphosphate site. Residue aspartate 151 coordinates Mg(2+). Thiamine diphosphate contacts are provided by residues 152–153 (GS), asparagine 180, tyrosine 290, and glutamate 372. Asparagine 180 is a binding site for Mg(2+).

The protein belongs to the transketolase family. DXPS subfamily. In terms of assembly, homodimer. Requires Mg(2+) as cofactor. Thiamine diphosphate serves as cofactor.

It carries out the reaction D-glyceraldehyde 3-phosphate + pyruvate + H(+) = 1-deoxy-D-xylulose 5-phosphate + CO2. Its pathway is metabolic intermediate biosynthesis; 1-deoxy-D-xylulose 5-phosphate biosynthesis; 1-deoxy-D-xylulose 5-phosphate from D-glyceraldehyde 3-phosphate and pyruvate: step 1/1. Functionally, catalyzes the acyloin condensation reaction between C atoms 2 and 3 of pyruvate and glyceraldehyde 3-phosphate to yield 1-deoxy-D-xylulose-5-phosphate (DXP). This chain is 1-deoxy-D-xylulose-5-phosphate synthase, found in Beijerinckia indica subsp. indica (strain ATCC 9039 / DSM 1715 / NCIMB 8712).